Consider the following 229-residue polypeptide: Large ribosomal subunit protein uL1 (229 aa).

The protein belongs to the universal ribosomal protein uL1 family. In terms of assembly, part of the 50S ribosomal subunit.

Its function is as follows. Binds directly to 23S rRNA. The L1 stalk is quite mobile in the ribosome, and is involved in E site tRNA release. Functionally, protein L1 is also a translational repressor protein, it controls the translation of the L11 operon by binding to its mRNA. The protein is Large ribosomal subunit protein uL1 of Phytoplasma australiense.